Here is a 688-residue protein sequence, read N- to C-terminus: Zinc finger protein 770 (688 aa).

Lys-11 is covalently cross-linked (Glycyl lysine isopeptide (Lys-Gly) (interchain with G-Cter in SUMO2)). 3 consecutive C2H2-type zinc fingers follow at residues 27–49 (YVCNICFKHFETPSKLARHYLIH), 55–77 (FECDVCHKTFRQLVHLERHQLTH), and 81–103 (FKCSICQRHFKNLKTFVKHQQLH). Residues Lys-112, Lys-121, and Lys-146 each participate in a glycyl lysine isopeptide (Lys-Gly) (interchain with G-Cter in SUMO2) cross-link. 3 C2H2-type zinc fingers span residues 160–182 (HACTICGKMFPSQSKLDRHVLIH), 188–210 (FKCVLCTKSFRQSTHLKIHQLTH), and 216–238 (FQCCFCQKGFKIQSKLLKHKQIH). Residue Lys-262 forms a Glycyl lysine isopeptide (Lys-Gly) (interchain with G-Cter in SUMO2) linkage. The C2H2-type 7; degenerate zinc-finger motif lies at 294-318 (FQCPKCEKCFESEQILNEHSCFPAR). Residues Lys-420 and Lys-437 each participate in a glycyl lysine isopeptide (Lys-Gly) (interchain with G-Cter in SUMO2) cross-link. 4 consecutive C2H2-type zinc fingers follow at residues 475–497 (CPCDKCEKVFPSISKLKRHYLIH), 503–525 (FGCNICGKSFRQSAHLKRHEQTH), 623–645 (YRCSVCAKSFRSPSKLERHYLIH), and 651–673 (FECSVCGKTFRQAPHWKRHQLTH). Residue Lys-681 forms a Glycyl lysine isopeptide (Lys-Gly) (interchain with G-Cter in SUMO2) linkage.

Belongs to the krueppel C2H2-type zinc-finger protein family.

It localises to the nucleus. Functionally, may be involved in transcriptional regulation. The protein is Zinc finger protein 770 (ZNF770) of Pongo abelii (Sumatran orangutan).